The chain runs to 173 residues: Alpha-crystallin A chain (173 aa).

M1 is modified (N-acetylmethionine). Positions 1-63 are required for complex formation with BFSP1 and BFSP2; during homooligomerization, mediates the association of 2 dimers to form a tetramer; the sequence is MDVTIQHPWF…RTVLDSGISE (63 aa). The residue at position 6 (Q6) is a Deamidated glutamine; partial. Residue S45 is modified to Phosphoserine. Q50 bears the Deamidated glutamine; partial mark. The 113-residue stretch at 52–164 folds into the sHSP domain; the sequence is LFRTVLDSGI…AERAIPVSRE (113 aa). K70 is modified (N6-acetyllysine). The residue at position 90 (Q90) is a Deamidated glutamine; partial. K99 carries the N6-acetyllysine modification. A Zn(2+)-binding site is contributed by H100. N101 carries the post-translational modification Deamidated asparagine; partial. Positions 102 and 107 each coordinate Zn(2+). Phosphoserine is present on S122. Residue N123 is modified to Deamidated asparagine; partial. A disulfide bridge links C131 with C142. Q147 carries the post-translational modification Deamidated glutamine; partial. H154 lines the Zn(2+) pocket. An O-linked (GlcNAc) serine glycan is attached at S162.

This sequence belongs to the small heat shock protein (HSP20) family. Heteropolymer composed of three CRYAA and one CRYAB subunits. Inter-subunit bridging via zinc ions enhances stability, which is crucial as there is no protein turn over in the lens. Can also form homodimers and homotetramers (dimers of dimers) which serve as the building blocks of homooligomers. Within homooligomers, the zinc-binding motif is created from residues of 3 different molecules. His-100 and Glu-102 from one molecule are ligands of the zinc ion, and His-107 and His-154 residues from additional molecules complete the site with tetrahedral coordination geometry. Part of a complex required for lens intermediate filament formation composed of BFSP1, BFSP2 and CRYAA. Post-translationally, O-glycosylated; contains N-acetylglucosamine side chains. In terms of processing, deamidation of Asn-101 in lens occurs mostly during the first 30 years of age, followed by a small additional amount of deamidation (approximately 5%) during the next approximately 38 years, resulting in a maximum of approximately 50% deamidation during the lifetime of the individual. Phosphorylation on Ser-122 seems to be developmentally regulated. Absent in the first months of life, it appears during the first 12 years of human lifetime. The relative amount of phosphorylated form versus unphosphorylated form does not change over the lifetime of the individual. Post-translationally, acetylation at Lys-70 may increase chaperone activity. In terms of processing, undergoes age-dependent proteolytical cleavage at the C-terminus. Alpha-crystallin A(1-172) is the most predominant form produced most rapidly during the first 12 years of age and after this age is present in approximately 50% of the lens molecules. In young individuals and during the first approximately 30 years of life, less than half molecules contain an intramolecular disulfide bond (oxidized form), while in the remaining fraction the cysteines are in the free sulfhydryl form (reduced form). With aging, the amount of oxidized form increases up to 90% and it becomes a major constituent of high molecular weight aggregates, concomitant with an age-dependent loss of its chaperone activity. The reduced form is undetectable in cataractous lenses. As to expression, expressed in the eye lens (at protein level).

It localises to the cytoplasm. The protein resides in the nucleus. Functionally, contributes to the transparency and refractive index of the lens. In its oxidized form (absence of intramolecular disulfide bond), acts as a chaperone, preventing aggregation of various proteins under a wide range of stress conditions. Required for the correct formation of lens intermediate filaments as part of a complex composed of BFSP1, BFSP2 and CRYAA. The chain is Alpha-crystallin A chain (CRYAA) from Homo sapiens (Human).